A 393-amino-acid chain; its full sequence is Tryptophan synthase beta chain (393 aa).

The residue at position 86 (K86) is an N6-(pyridoxal phosphate)lysine.

It belongs to the TrpB family. Tetramer of two alpha and two beta chains. Pyridoxal 5'-phosphate serves as cofactor.

It carries out the reaction (1S,2R)-1-C-(indol-3-yl)glycerol 3-phosphate + L-serine = D-glyceraldehyde 3-phosphate + L-tryptophan + H2O. Its pathway is amino-acid biosynthesis; L-tryptophan biosynthesis; L-tryptophan from chorismate: step 5/5. Its function is as follows. The beta subunit is responsible for the synthesis of L-tryptophan from indole and L-serine. This chain is Tryptophan synthase beta chain, found in Alteromonas mediterranea (strain DSM 17117 / CIP 110805 / LMG 28347 / Deep ecotype).